The sequence spans 130 residues: Large ribosomal subunit protein bL12 (130 aa).

It belongs to the bacterial ribosomal protein bL12 family. Homodimer. Part of the ribosomal stalk of the 50S ribosomal subunit. Forms a multimeric L10(L12)X complex, where L10 forms an elongated spine to which 2 to 4 L12 dimers bind in a sequential fashion. Binds GTP-bound translation factors.

Functionally, forms part of the ribosomal stalk which helps the ribosome interact with GTP-bound translation factors. Is thus essential for accurate translation. The chain is Large ribosomal subunit protein bL12 from Nostoc punctiforme (strain ATCC 29133 / PCC 73102).